A 127-amino-acid polypeptide reads, in one-letter code: uncharacterized protein (127 aa).

This is an uncharacterized protein from Acanthamoeba polyphaga (Amoeba).